Consider the following 130-residue polypeptide: Albumin-1 C (130 aa).

An N-terminal signal peptide occupies residues 1–26; that stretch reads MASVKLASLIVLFATLGMFLTKNVGA. 3 disulfides stabilise this stretch: Cys29–Cys46, Cys33–Cys48, and Cys41–Cys58. 2 propeptides span residues 64 to 69 and 123 to 130; these read VFLRTN and LLKSVSTA.

The C-terminal glycine may be removed from PA1b. As to expression, major component of both the cotyledons and embryonic axes of mature seeds.

Functionally, PA1b binds to basic 7S globulin (BG) and stimulates its phosphorylation activity. Involved in the signal transduction system to regulate the growth and differentiation as a hormone peptide. Toxic to various insects through binding to a high affinity binding site in the insect gut. The sequence is that of Albumin-1 C from Pisum sativum (Garden pea).